A 219-amino-acid chain; its full sequence is MESKLSFESFFYNESKKAYFQKLMEKLDEEYEKYQVFPNKKDLFRAIELTNFATLKIVIIGQDPYHRKGQADGLAFSTRTKILPPSLRNLFLEIKNAYPNFSKENGNLENWAKQGVLLLNHVLTVRKSSPNSHKNIGWEVFSSNLINFIVKNKVDIVFLLLGKKAKLAVKNINLEKQKVFAYSHPSPFSFAKSLKNSMVFRKINDFLKEKKRLEINWNL.

D63 acts as the Proton acceptor in catalysis.

The protein belongs to the uracil-DNA glycosylase (UDG) superfamily. UNG family.

It localises to the cytoplasm. It catalyses the reaction Hydrolyzes single-stranded DNA or mismatched double-stranded DNA and polynucleotides, releasing free uracil.. Excises uracil residues from the DNA which can arise as a result of misincorporation of dUMP residues by DNA polymerase or due to deamination of cytosine. This Mesomycoplasma hyopneumoniae (strain 7448) (Mycoplasma hyopneumoniae) protein is Uracil-DNA glycosylase.